A 639-amino-acid polypeptide reads, in one-letter code: Threonine--tRNA ligase (639 aa).

A TGS domain is found at 1–61 (MIHITLPDGS…TQDSPLSIVT (61 aa)). The interval 242–533 (DHRKLGRELD…LIEEHAGALP (292 aa)) is catalytic. Zn(2+) is bound by residues cysteine 333, histidine 384, and histidine 510.

The protein belongs to the class-II aminoacyl-tRNA synthetase family. Homodimer. Zn(2+) is required as a cofactor.

Its subcellular location is the cytoplasm. The enzyme catalyses tRNA(Thr) + L-threonine + ATP = L-threonyl-tRNA(Thr) + AMP + diphosphate + H(+). In terms of biological role, catalyzes the attachment of threonine to tRNA(Thr) in a two-step reaction: L-threonine is first activated by ATP to form Thr-AMP and then transferred to the acceptor end of tRNA(Thr). Also edits incorrectly charged L-seryl-tRNA(Thr). This Acidovorax ebreus (strain TPSY) (Diaphorobacter sp. (strain TPSY)) protein is Threonine--tRNA ligase.